A 31-amino-acid polypeptide reads, in one-letter code: GSIPCAESCVYIPCFTGIAGCSCKNKVCYYN.

The segment at residues 1–31 (GSIPCAESCVYIPCFTGIAGCSCKNKVCYYN) is a cross-link (cyclopeptide (Gly-Asn)). 3 cysteine pairs are disulfide-bonded: Cys5–Cys21, Cys9–Cys23, and Cys14–Cys28.

The protein belongs to the cyclotide family. Bracelet subfamily. Post-translationally, this is a cyclic peptide.

Probably participates in a plant defense mechanism. This is Cyclotide vico-A from Viola cotyledon (Violeta).